We begin with the raw amino-acid sequence, 259 residues long: Flagellar brake protein YcgR (259 aa).

The region spanning 129–246 (QRREFYRLQT…DNAIQRYIFK (118 aa)) is the PilZ domain.

Belongs to the YcgR family. In terms of assembly, monomer. Interacts with the flagellar basal bodies.

It localises to the bacterial flagellum basal body. Acts as a flagellar brake, regulating swimming and swarming in a bis-(3'-5') cyclic diguanylic acid (c-di-GMP)-dependent manner. Binds 1 c-di-GMP dimer per subunit. Increasing levels of c-di-GMP lead to decreased motility. The chain is Flagellar brake protein YcgR from Azoarcus sp. (strain BH72).